Reading from the N-terminus, the 620-residue chain is DNA primase (620 aa).

The CHC2-type zinc finger occupies 38–62; sequence CPFHADQNPSMTVSVAKNIFKCFSC. The Toprim domain occupies 266–350; that stretch reads LKLYLVEGYF…IVEVVDWNQA (85 aa). Mg(2+) contacts are provided by Glu-272, Asp-319, and Asp-321.

The protein belongs to the DnaG primase family. In terms of assembly, monomer. Interacts with DnaB. It depends on Zn(2+) as a cofactor. Mg(2+) serves as cofactor.

It carries out the reaction ssDNA + n NTP = ssDNA/pppN(pN)n-1 hybrid + (n-1) diphosphate.. RNA polymerase that catalyzes the synthesis of short RNA molecules used as primers for DNA polymerase during DNA replication. This is DNA primase from Mycoplasma pneumoniae (strain ATCC 29342 / M129 / Subtype 1) (Mycoplasmoides pneumoniae).